Consider the following 132-residue polypeptide: Small ribosomal subunit protein uS8c (132 aa).

This sequence belongs to the universal ribosomal protein uS8 family. As to quaternary structure, part of the 30S ribosomal subunit.

It is found in the plastid. The protein localises to the chloroplast. In terms of biological role, one of the primary rRNA binding proteins, it binds directly to 16S rRNA central domain where it helps coordinate assembly of the platform of the 30S subunit. The protein is Small ribosomal subunit protein uS8c (rps8) of Calycanthus floridus var. glaucus (Eastern sweetshrub).